The primary structure comprises 241 residues: MAGHSKWANIQHRKGRQDAKRGKIFTRLIKEITVAAKMGGGDANMNPRLRLAVDKAKAESMPKDNIENAIKRGTGQLDGVDYVECRYEGYGIAGAAVMVDCLTDNKTRTVADVRHAFSKYGGNMGTDGCVAFQFKHCGYLVFAPGVDEDALMEAALEAGAEDVVSNDDGSIEVITGPYEFSDVKDALEAKGFKSEMGEVTMRAENETELSGDDAVRMQKLLDALEDLDDVQDVYTSAVIGE.

It belongs to the TACO1 family.

The protein resides in the cytoplasm. The sequence is that of Probable transcriptional regulatory protein CV_3123 from Chromobacterium violaceum (strain ATCC 12472 / DSM 30191 / JCM 1249 / CCUG 213 / NBRC 12614 / NCIMB 9131 / NCTC 9757 / MK).